The sequence spans 315 residues: Heme oxygenase 2 (315 aa).

Positions 1 to 12 (MSSEVETSEGVD) are enriched in acidic residues. The interval 1 to 28 (MSSEVETSEGVDESEKNSMAPEKENHTK) is disordered. An N-acetylserine modification is found at S2. Residue S2 is modified to Phosphoserine. Over 2-294 (SSEVETSEGV…TTVAVLRKPS (293 aa)) the chain is Cytoplasmic. Residues 13 to 28 (ESEKNSMAPEKENHTK) show a composition bias toward basic and acidic residues. Heme b contacts are provided by H44, Y153, K198, and R202. 2 HRM repeats span residues 263-268 (KCPFYA) and 280-285 (NCPFQT). 2 positions are modified to S-nitrosocysteine: C264 and C281. The helical; Anchor for type IV membrane protein transmembrane segment at 295 to 315 (LQLILAASVALVAGLLAWYYM) threads the bilayer.

This sequence belongs to the heme oxygenase family. In terms of processing, a soluble form arises by proteolytic removal of the membrane anchor. Post-translationally, S-nitrosylated by BLVRB. Ubiquitous.

The protein resides in the microsome membrane. Its subcellular location is the endoplasmic reticulum membrane. The enzyme catalyses heme b + 3 reduced [NADPH--hemoprotein reductase] + 3 O2 = biliverdin IXalpha + CO + Fe(2+) + 3 oxidized [NADPH--hemoprotein reductase] + 3 H2O + H(+). Its function is as follows. Catalyzes the oxidative cleavage of heme at the alpha-methene bridge carbon, released as carbon monoxide (CO), to generate biliverdin IXalpha, while releasing the central heme iron chelate as ferrous iron. The protein is Heme oxygenase 2 (Hmox2) of Mus musculus (Mouse).